The chain runs to 367 residues: Germination protease (367 aa).

A propeptide spanning residues 1-15 (MKEPLDLSKYSVRTD) is cleaved from the precursor.

This sequence belongs to the peptidase A25 family. In terms of assembly, homotetramer. Autoproteolytically processed. The inactive tetrameric zymogen termed p46 autoprocesses to a smaller form termed p41, which is active only during spore germination.

It catalyses the reaction Endopeptidase action with P4 Glu or Asp, P1 preferably Glu &gt; Asp, P1' hydrophobic and P2' Ala.. Its function is as follows. Initiates the rapid degradation of small, acid-soluble proteins during spore germination. The protein is Germination protease of Bacillus mycoides (strain KBAB4) (Bacillus weihenstephanensis).